The following is a 2234-amino-acid chain: Bridge-like lipid transfer protein family member 2 (2234 aa).

Residues 1-31 (MPLFLSALLVLLLVALSALFLGRWLVVRLAT) form the signal peptide. The tract at residues 29–108 (LATRWCQRKL…LQKVSSLSAP (80 aa)) is transmembrane domain. Residue S563 is modified to Phosphoserine. Positions 1496 to 1529 (QMSAKKPKRGIPPSAQVPPHVSTPSFSGRPDKGS) are disordered. The stretch at 1814–1885 (ILHLQEAVRQ…LNILIRCFKD (72 aa)) forms a coiled coil. Phosphoserine is present on residues S1846 and S2090.

Belongs to the SABRE family.

The protein resides in the cell membrane. The protein localises to the endoplasmic reticulum membrane. It localises to the mitochondrion membrane. Its function is as follows. Tube-forming lipid transport protein which binds to phosphatidylinositols and affects phosphatidylinositol-4,5-bisphosphate (PtdIns-4,5-P2) distribution. The polypeptide is Bridge-like lipid transfer protein family member 2 (Bltp2) (Mus musculus (Mouse)).